We begin with the raw amino-acid sequence, 697 residues long: Elongation factor G (697 aa).

In terms of domain architecture, tr-type G spans Glu10 to Leu285. GTP is bound by residues Ala19 to Thr26, Asp83 to His87, and Asn137 to Asp140.

Belongs to the TRAFAC class translation factor GTPase superfamily. Classic translation factor GTPase family. EF-G/EF-2 subfamily.

It localises to the cytoplasm. In terms of biological role, catalyzes the GTP-dependent ribosomal translocation step during translation elongation. During this step, the ribosome changes from the pre-translocational (PRE) to the post-translocational (POST) state as the newly formed A-site-bound peptidyl-tRNA and P-site-bound deacylated tRNA move to the P and E sites, respectively. Catalyzes the coordinated movement of the two tRNA molecules, the mRNA and conformational changes in the ribosome. This is Elongation factor G from Ligilactobacillus salivarius (strain UCC118) (Lactobacillus salivarius).